Reading from the N-terminus, the 375-residue chain is MKQKVVVGLSGGVDSSVACYLLLQQGYEVEGLFMRNWDSATNNDILGNTNINDDICPQEQDYLDAKAVADKLNIKLHRVDFIKEYWDYVFSYFIEEYKKARTPNPDILCNKYIKFDKFLNYAINQLNADYIAMGHYAKVEFNKTTKQYELIKASDINKDQTYFLSQLNQNQLSKTLFPLANLTKEQVRKIALEQNLITANKKDSTGICFIGERNFTSFLQNYIPSQTGDIVDIKTNKVLGKHIGIMYYTIGQRKGINLSGMSEPYYVADKDVKKNILYVCSTSDQSYLYSTSCLVNDINWILDISKYVDDVNQFECQAKFRYRQLDNKVVVKKIDDNNYKVMFKKPLKAITIGQQAVFYLDDICLGGAVIDKVIK.

ATP contacts are provided by residues 8–15 (GLSGGVDS) and methionine 34. Residues 104 to 106 (NPD) are interaction with target base in tRNA. Cysteine 109 acts as the Nucleophile in catalysis. Cysteine 109 and cysteine 208 form a disulfide bridge. Position 134 (glycine 134) interacts with ATP. The tract at residues 158 to 160 (KDQ) is interaction with tRNA. The active-site Cysteine persulfide intermediate is cysteine 208. The interval 321-322 (RY) is interaction with tRNA.

Belongs to the MnmA/TRMU family.

The protein resides in the cytoplasm. The enzyme catalyses S-sulfanyl-L-cysteinyl-[protein] + uridine(34) in tRNA + AH2 + ATP = 2-thiouridine(34) in tRNA + L-cysteinyl-[protein] + A + AMP + diphosphate + H(+). Its function is as follows. Catalyzes the 2-thiolation of uridine at the wobble position (U34) of tRNA, leading to the formation of s(2)U34. The polypeptide is tRNA-specific 2-thiouridylase MnmA (Mycoplasma capricolum subsp. capricolum (strain California kid / ATCC 27343 / NCTC 10154)).